The following is a 198-amino-acid chain: Recombination protein RecR (198 aa).

A C4-type zinc finger spans residues 57 to 72 (CSVCGHITENDPCYIC). The 96-residue stretch at 80–175 (SVICVVEDDK…KVTRLAQGLS (96 aa)) folds into the Toprim domain.

It belongs to the RecR family.

In terms of biological role, may play a role in DNA repair. It seems to be involved in an RecBC-independent recombinational process of DNA repair. It may act with RecF and RecO. This chain is Recombination protein RecR, found in Staphylococcus aureus (strain Mu3 / ATCC 700698).